The chain runs to 755 residues: Dynamin-1-like protein (755 aa).

Met-1 carries the N-acetylmethionine modification. In terms of domain architecture, Dynamin-type G spans 22 to 315; the sequence is IIQLPQIVVV…LMHHIRDCLP (294 aa). A G1 motif region spans residues 32 to 39; the sequence is GTQSSGKS. 32–40 contacts GTP; that stretch reads GTQSSGKSS. The G2 motif stretch occupies residues 58 to 60; sequence VTR. Residues 159-162 form a G3 motif region; the sequence is DLPG. Residues 228 to 231 form a G4 motif region; it reads TKLD. GTP is bound by residues 228-234 and 259-262; these read TKLDLMD and NRSQ. Residues 258–261 form a G5 motif region; it reads VNRS. The interval 357 to 502 is middle domain; sequence YCNTIEGTAK…NEMVHNLVAI (146 aa). The segment at 461-704 is interaction with GSK3B; that stretch reads NYSTQELLRF…NHVKDTLQSE (244 aa). Residues 515–582 are b domain; the sequence is ADACGLMNNN…IQDNRRETKN (68 aa). Positions 536-610 are disordered; the sequence is ELPSAVSRDK…QEPTTGNWRG (75 aa). Ser-542 carries the post-translational modification Phosphoserine. Residues Lys-545 and Lys-548 each participate in a glycyl lysine isopeptide (Lys-Gly) (interchain with G-Cter in SUMO) cross-link. Over residues 550 to 567 the composition is skewed to low complexity; it reads PSALAPASQEPSPAASAE. The residue at position 561 (Ser-561) is a Phosphoserine. Residues 568–581 are compositionally biased toward basic and acidic residues; sequence ADGKLIQDNRRETK. Residues Lys-571 and Lys-581 each participate in a glycyl lysine isopeptide (Lys-Gly) (interchain with G-Cter in SUMO) cross-link. Over residues 586-600 the composition is skewed to gly residues; that stretch reads AGGGIGDGGRIGDGG. 2 O-linked (GlcNAc) threonine glycosylation sites follow: Thr-604 and Thr-605. Residue Lys-613 forms a Glycyl lysine isopeptide (Lys-Gly) (interchain with G-Cter in SUMO) linkage. Lys-616 carries the N6-acetyllysine; alternate modification. A Glycyl lysine isopeptide (Lys-Gly) (interchain with G-Cter in SUMO); alternate cross-link involves residue Lys-616. A Glycyl lysine isopeptide (Lys-Gly) (interchain with G-Cter in SUMO) cross-link involves residue Lys-625. Phosphoserine is present on Ser-626. Lys-627 is covalently cross-linked (Glycyl lysine isopeptide (Lys-Gly) (interchain with G-Cter in SUMO)). Residue Ser-635 is modified to Phosphoserine; by CDK1. A Phosphoserine; by CAMK1 and PKA modification is found at Ser-656. S-nitrosocysteine is present on Cys-663. The region spanning 663-754 is the GED domain; the sequence is CEVIERLIKS…IIAEIRETHL (92 aa). The tract at residues 673-687 is important for homodimerization; it reads YFLIVRKNIQDSVPK.

This sequence belongs to the TRAFAC class dynamin-like GTPase superfamily. Dynamin/Fzo/YdjA family. Homotetramer; dimerizes through the N-terminal GTP-middle region of one molecule binding to the GED domain of another DNM1L molecule. Oligomerizes in a GTP-dependent manner to form membrane-associated tubules with a spiral pattern. Interacts with GSK3B and MARCHF5. Interacts (via the GTPase and B domains) with UBE2I; the interaction promotes sumoylation of DNM1L, mainly in its B domain. Interacts with PPP3CA; the interaction dephosphorylates DNM1L and regulates its transition to mitochondria. Interacts with BCL2L1 isoform BCL-X(L) and CLTA; DNM1L and BCL2L1 isoform BCL-X(L) may form a complex in synaptic vesicles that also contains clathrin and MFF. Interacts with MFF; the interaction is inhinited by C11orf65/MFI. Interacts with FIS1. Interacts with MIEF2 and MIEF1; GTP-dependent this regulates GTP hydrolysis and DNM1L oligomerization. Interacts with PGAM5; this interaction leads to dephosphorylation at Ser-656 and activation of GTPase activity and eventually to mitochondria fragmentation. Interacts with RALBP1; during mitosis, recruits DNM1L to the mitochondrion and mediates its activation by the mitotic kinase cyclin B-CDK1. Interacts with FUNDC1; this interaction recruits DNM1L/DRP1 at ER-mitochondria contact sites. Post-translationally, phosphorylation/dephosphorylation events on two sites near the GED domain regulate mitochondrial fission. Phosphorylation on Ser-656 by CAMK1 and PKA inhibits the GTPase activity, leading to a defect in mitochondrial fission promoting mitochondrial elongation. Dephosphorylated on this site by PPP3CA which promotes mitochondrial fission. Phosphorylation on Ser-635 by PINK1 activates the GTPase activity and promotes mitochondrial fission. Phosphorylation on Ser-635 by CDK1 also promotes mitochondrial fission. Phosphorylated in a circadian manner at Ser-656. Dephosphorylated by PGAM5. Sumoylated on various lysine residues within the B domain, probably by MUL1. Sumoylation positively regulates mitochondrial fission. Desumoylated by SENP5 during G2/M transition of mitosis. Appears to be linked to its catalytic activity. In terms of processing, S-nitrosylation increases DNM1L dimerization, mitochondrial fission and causes neuronal damage. Post-translationally, O-GlcNAcylation augments the level of the GTP-bound active form of DNM1L and induces translocation from the cytoplasm to mitochondria in cardiomyocytes. It also decreases phosphorylation at Ser-656. Ubiquitination by MARCHF5 affects mitochondrial morphology. As to expression, expressed in all tissues tested (at protein level). Longer isoforms are preferentially expressed in brain.

The protein resides in the cytoplasm. It is found in the cytosol. It localises to the golgi apparatus. The protein localises to the endomembrane system. Its subcellular location is the mitochondrion outer membrane. The protein resides in the peroxisome. It is found in the membrane. It localises to the clathrin-coated pit. The protein localises to the cytoplasmic vesicle. Its subcellular location is the secretory vesicle. The protein resides in the synaptic vesicle membrane. It catalyses the reaction GTP + H2O = GDP + phosphate + H(+). Functionally, functions in mitochondrial and peroxisomal division. Mediates membrane fission through oligomerization into membrane-associated tubular structures that wrap around the scission site to constrict and sever the mitochondrial membrane through a GTP hydrolysis-dependent mechanism. The specific recruitment at scission sites is mediated by membrane receptors like MFF, MIEF1 and MIEF2 for mitochondrial membranes. While the recruitment by the membrane receptors is GTP-dependent, the following hydrolysis of GTP induces the dissociation from the receptors and allows DNM1L filaments to curl into closed rings that are probably sufficient to sever a double membrane. Acts downstream of PINK1 to promote mitochondrial fission in a PRKN-dependent manner. Plays an important role in mitochondrial fission during mitosis. Through its function in mitochondrial division, ensures the survival of at least some types of postmitotic neurons, including Purkinje cells, by suppressing oxidative damage. Required for normal brain development, including that of cerebellum. Facilitates developmentally regulated apoptosis during neural tube formation. Required for a normal rate of cytochrome c release and caspase activation during apoptosis; this requirement may depend upon the cell type and the physiological apoptotic cues. Required for formation of endocytic vesicles. Proposed to regulate synaptic vesicle membrane dynamics through association with BCL2L1 isoform Bcl-X(L) which stimulates its GTPase activity in synaptic vesicles; the function may require its recruitment by MFF to clathrin-containing vesicles. Required for programmed necrosis execution. Rhythmic control of its activity following phosphorylation at Ser-656 is essential for the circadian control of mitochondrial ATP production. The protein is Dynamin-1-like protein of Rattus norvegicus (Rat).